We begin with the raw amino-acid sequence, 530 residues long: 4,4'-diapolycopene aldehyde oxidase (530 aa).

Catalysis depends on residues Glu-234 and Cys-268.

This sequence belongs to the aldehyde dehydrogenase family.

The catalysed reaction is all-trans-4,4'-diapolycopen-4-al + A + H2O = all-trans-4,4'-diapolycopen-4-oate + AH2 + H(+). The enzyme catalyses all-trans-4,4'-diapolycopene-4,4'-dial + 2 A + 2 H2O = all-trans-4,4'-diapolycopene-4,4'-dioate + 2 AH2 + 2 H(+). The protein operates within carotenoid biosynthesis. Involved in the biosynthesis of C30 carotenoids. Catalyzes the oxidation of 4,4'-diapolycopene-4,4'-dial to yield 4,4'-diapolycopene-4,4'-dioic acid. Also able to catalyze the oxidation of 4,4'-diapolycopen-4-al to yield 4,4'-diapolycopen-4-oic acid. The polypeptide is 4,4'-diapolycopene aldehyde oxidase (Methylomonas sp).